A 188-amino-acid polypeptide reads, in one-letter code: Small ribosomal subunit protein bS16 (188 aa).

The interval 155-188 (IAAASATEEAATEEVAEAAEEAPAAEENNETTEA) is disordered. A compositionally biased stretch (acidic residues) spans 164-188 (AATEEVAEAAEEAPAAEENNETTEA).

Belongs to the bacterial ribosomal protein bS16 family.

In Flavobacterium johnsoniae (strain ATCC 17061 / DSM 2064 / JCM 8514 / BCRC 14874 / CCUG 350202 / NBRC 14942 / NCIMB 11054 / UW101) (Cytophaga johnsonae), this protein is Small ribosomal subunit protein bS16.